The chain runs to 503 residues: Transmembrane protein 184C (503 aa).

Transmembrane regions (helical) follow at residues 17–37 (LLIL…IWEF), 48–68 (VWFI…CGIL), 83–103 (IIRI…ALKY), 115–135 (ECYE…YLTI), 212–232 (YLVI…LLFY), 254–274 (VVFV…VGVI), and 287–307 (AVAT…AAIA). Disordered regions lie at residues 358–391 (PKKK…SPVG) and 479–503 (SPKP…STDS). Positions 373 to 388 (SSLLSASSQDSSKPSS) are enriched in low complexity. Residues 494-503 (PEGSDSSTDS) are compositionally biased toward polar residues.

Belongs to the TMEM184 family.

The protein localises to the membrane. Functionally, possible tumor suppressor which may play a role in cell growth. This chain is Transmembrane protein 184C (Tmem184c), found in Rattus norvegicus (Rat).